The primary structure comprises 240 residues: UPF0309 protein in nagA 3'region (240 aa).

The SIS domain maps to 31–206; that stretch reads IVKRLVQGGI…CAQIIEILHE (176 aa).

It belongs to the UPF0309 family.

This is UPF0309 protein in nagA 3'region from Lysinibacillus sphaericus (Bacillus sphaericus).